The chain runs to 883 residues: Valine--tRNA ligase (883 aa).

Residues Pro-51–His-61 carry the 'HIGH' region motif. The 'KMSKS' region motif lies at Lys-527–Ser-531. Lys-530 serves as a coordination point for ATP. The stretch at Leu-811 to Phe-847 forms a coiled coil.

This sequence belongs to the class-I aminoacyl-tRNA synthetase family. ValS type 1 subfamily. Monomer.

It localises to the cytoplasm. It carries out the reaction tRNA(Val) + L-valine + ATP = L-valyl-tRNA(Val) + AMP + diphosphate. In terms of biological role, catalyzes the attachment of valine to tRNA(Val). As ValRS can inadvertently accommodate and process structurally similar amino acids such as threonine, to avoid such errors, it has a 'posttransfer' editing activity that hydrolyzes mischarged Thr-tRNA(Val) in a tRNA-dependent manner. In Listeria monocytogenes serovar 1/2a (strain ATCC BAA-679 / EGD-e), this protein is Valine--tRNA ligase.